We begin with the raw amino-acid sequence, 69 residues long: Conotoxin Fr3.1 (69 aa).

Residues Met1 to Leu20 form the signal peptide. A propeptide spanning residues Gln21 to Arg51 is cleaved from the precursor. Position 52 is a pyrrolidone carboxylic acid (Gln52). Glu54 is modified (4-carboxyglutamate). Position 58 is a 4-hydroxyproline (Pro58).

Belongs to the conotoxin M superfamily. Expressed by the venom duct.

It is found in the secreted. Probable toxin. This Conus frigidus (Frigid cone) protein is Conotoxin Fr3.1.